The primary structure comprises 402 residues: MGLAEGLAARMAPHLYIQEPLSAQQLKKLEEHKYSASGRSLVEPPMQVYWNWLVEKVPLWLAPNTITMVGLLLNVLSTLILVCYCPTATEGAPFWTYLLCAIGLFVYQSLDAIDGKQARRTNSSSPLGEMFDHGCDSISIVFVNLGTIAAVRLGTLPGWMFYCCFVGMFMFYCAQWQTYVCGTLKFGIIDVTELQISVTVMFLMTAVCGPELWDYEIPFTGLPMKTIPLLGIIGGTVYSCSNYFRVILSGGVGKNGSTVAGTSVLSPGLHIGLVLLLALMIYKKSTTNLFLQNPCLYTLAFGFVSAKITIKLVIAHMTKSEISLQDTAFIGPGLLFFNQYFNSFIDEYIVLWIAMVISFADLLRYCISVCLQIATHLRISVFRISSNQAAEQVQTQKQKLTD.

Topologically, residues 1–62 (MGLAEGLAAR…LVEKVPLWLA (62 aa)) are cytoplasmic. A helical transmembrane segment spans residues 63–83 (PNTITMVGLLLNVLSTLILVC). N64 serves as a coordination point for CDP-choline. The Lumenal portion of the chain corresponds to 84–93 (YCPTATEGAP). A helical membrane pass occupies residues 94 to 118 (FWTYLLCAIGLFVYQSLDAIDGKQA). Mg(2+) is bound by residues D111 and D114. R119 lines the CDP-choline pocket. Over 119-125 (RRTNSSS) the chain is Cytoplasmic. A helical membrane pass occupies residues 126–150 (PLGEMFDHGCDSISIVFVNLGTIAA). Residue D132 participates in Mg(2+) binding. H133 acts as the Proton acceptor in catalysis. Mg(2+) is bound at residue D136. Residues 151–160 (VRLGTLPGWM) lie on the Lumenal side of the membrane. A helical transmembrane segment spans residues 161–179 (FYCCFVGMFMFYCAQWQTY). The Cytoplasmic portion of the chain corresponds to 180–190 (VCGTLKFGIID). Residues 191–207 (VTELQISVTVMFLMTAV) form a helical membrane-spanning segment. Residues 208-222 (CGPELWDYEIPFTGL) are Lumenal-facing. A helical transmembrane segment spans residues 223–248 (PMKTIPLLGIIGGTVYSCSNYFRVIL). The Cytoplasmic portion of the chain corresponds to 249–265 (SGGVGKNGSTVAGTSVL). Residues 266–281 (SPGLHIGLVLLLALMI) form a helical membrane-spanning segment. Residues 282-293 (YKKSTTNLFLQN) lie on the Lumenal side of the membrane. A helical transmembrane segment spans residues 294–316 (PCLYTLAFGFVSAKITIKLVIAH). Over 317-329 (MTKSEISLQDTAF) the chain is Cytoplasmic. The chain crosses the membrane as a helical span at residues 330–339 (IGPGLLFFNQ). Residues 340-346 (YFNSFID) are Lumenal-facing. A helical transmembrane segment spans residues 347-376 (EYIVLWIAMVISFADLLRYCISVCLQIATH). The Cytoplasmic segment spans residues 377-402 (LRISVFRISSNQAAEQVQTQKQKLTD).

The protein belongs to the CDP-alcohol phosphatidyltransferase class-I family. In terms of assembly, homodimer. Mg(2+) is required as a cofactor. The cofactor is Mn(2+).

Its subcellular location is the golgi apparatus membrane. The catalysed reaction is CDP-choline + a 1,2-diacyl-sn-glycerol = a 1,2-diacyl-sn-glycero-3-phosphocholine + CMP + H(+). It catalyses the reaction 1,2-dioctanoyl-sn-glycerol + CDP-choline = 1,2-dioctanoyl-sn-glycero-3-phosphocholine + CMP + H(+). It carries out the reaction 1-octadecanoyl-2-(5Z,8Z,11Z,14Z-eicosatetraenoyl)-sn-glycerol + CDP-choline = 1-octadecanoyl-2-(5Z,8Z,11Z,14Z-eicosatetraenoyl)-sn-glycero-3-phosphocholine + CMP + H(+). The enzyme catalyses 1-hexadecanoyl-2-(9Z-octadecenoyl)-sn-glycerol + CDP-choline = 1-hexadecanoyl-2-(9Z-octadecenoyl)-sn-glycero-3-phosphocholine + CMP + H(+). The catalysed reaction is 1-hexadecanoyl-2-(4Z,7Z,10Z,13Z,16Z,19Z-docosahexaenoyl)-sn-glycerol + CDP-choline = 1-hexadecanoyl-2-(4Z,7Z,10Z,13Z,16Z,19Z-docosahexaenoyl)-sn-glycero-3-phosphocholine + CMP + H(+). It participates in phospholipid metabolism; phosphatidylcholine biosynthesis; phosphatidylcholine from phosphocholine: step 2/2. Its function is as follows. Catalyzes the final step of de novo phosphatidylcholine (PC) synthesis, i.e. the transfer of choline phosphate from CDP-choline to the free hydroxyl of a diacylglycerol (DAG), producing a PC. It thereby plays a central role in the formation and maintenance of vesicular membranes. Shows a high preference for CDP-choline over CDP-ethanolamine as substrate. The chain is Cholinephosphotransferase 1 (chpt1) from Xenopus laevis (African clawed frog).